The chain runs to 594 residues: ATP-dependent zinc metalloprotease FtsH 1 (594 aa).

The Cytoplasmic portion of the chain corresponds to 1-2 (MR). The chain crosses the membrane as a helical span at residues 3–23 (WWAGAALLLAALLFGRPAAAM). Residues 24–92 (EAQPVAYSEF…RVEFVRPADP (69 aa)) are Extracellular-facing. The chain crosses the membrane as a helical span at residues 93-113 (IAFRTLLRFIPPLLILGAILW). The Cytoplasmic portion of the chain corresponds to 114–594 (FTRRTAGGSG…ANSRGDEGNQ (481 aa)). Position 186-193 (186-193 (GPPGTGKT)) interacts with ATP. Residue histidine 408 participates in Zn(2+) binding. Glutamate 409 is a catalytic residue. Zn(2+)-binding residues include histidine 412 and aspartate 485.

The protein in the central section; belongs to the AAA ATPase family. It in the C-terminal section; belongs to the peptidase M41 family. As to quaternary structure, homohexamer. It depends on Zn(2+) as a cofactor.

The protein localises to the cell membrane. In terms of biological role, acts as a processive, ATP-dependent zinc metallopeptidase for both cytoplasmic and membrane proteins. Plays a role in the quality control of integral membrane proteins. The protein is ATP-dependent zinc metalloprotease FtsH 1 of Symbiobacterium thermophilum (strain DSM 24528 / JCM 14929 / IAM 14863 / T).